The primary structure comprises 208 residues: Protein-L-isoaspartate O-methyltransferase (208 aa).

Ser59 is a catalytic residue.

The protein belongs to the methyltransferase superfamily. L-isoaspartyl/D-aspartyl protein methyltransferase family.

Its subcellular location is the cytoplasm. It catalyses the reaction [protein]-L-isoaspartate + S-adenosyl-L-methionine = [protein]-L-isoaspartate alpha-methyl ester + S-adenosyl-L-homocysteine. Its function is as follows. Catalyzes the methyl esterification of L-isoaspartyl residues in peptides and proteins that result from spontaneous decomposition of normal L-aspartyl and L-asparaginyl residues. It plays a role in the repair and/or degradation of damaged proteins. The chain is Protein-L-isoaspartate O-methyltransferase from Aliivibrio fischeri (strain MJ11) (Vibrio fischeri).